The chain runs to 471 residues: Adenosylhomocysteinase (471 aa).

Residues Thr60, Asp135, and Glu196 each contribute to the substrate site. 197 to 199 (TTT) is a binding site for NAD(+). Lys226 and Asp230 together coordinate substrate. NAD(+) contacts are provided by residues Asn231, 260-265 (GYGDVG), Glu283, Asn318, 339-341 (IGH), and Asn387.

This sequence belongs to the adenosylhomocysteinase family. NAD(+) is required as a cofactor.

Its subcellular location is the cytoplasm. It catalyses the reaction S-adenosyl-L-homocysteine + H2O = L-homocysteine + adenosine. It functions in the pathway amino-acid biosynthesis; L-homocysteine biosynthesis; L-homocysteine from S-adenosyl-L-homocysteine: step 1/1. Its function is as follows. May play a key role in the regulation of the intracellular concentration of adenosylhomocysteine. This is Adenosylhomocysteinase from Chlorobaculum parvum (strain DSM 263 / NCIMB 8327) (Chlorobium vibrioforme subsp. thiosulfatophilum).